The sequence spans 433 residues: Inorganic triphosphatase (433 aa).

A CYTH domain is found at 2–202; sequence AQEIELKFIV…ARGYHLAQGN (201 aa). In terms of domain architecture, CHAD spans 218 to 433; sequence KADVEQGLEA…EPFWLHSGKR (216 aa).

It catalyses the reaction triphosphate + H2O = phosphate + diphosphate. Its activity is regulated as follows. Inhibited by calcium ion and activated by magnesium ion. In terms of biological role, involved in the hydrolysis of the beta-gamma-phosphoanhydride linkage of triphosphate-containing substrates (inorganic or nucleoside-linked). Catalyzes the hydrolysis of inorganic triphosphate (PPPi), which could be cytotoxic because of its high affinity for calcium ion, thereby interfering with calcium signaling. It also hydrolyzes slowly thiamine triphosphate (ThTP). YgiF is a specific PPPase, but it contributes only marginally to the total PPPase activity in E.coli, where the main enzyme responsible for hydrolysis of PPPi is inorganic pyrophosphatase (PPase). This chain is Inorganic triphosphatase (ygiF), found in Escherichia coli (strain K12).